Consider the following 404-residue polypeptide: Odorant receptor 67c (404 aa).

The Cytoplasmic portion of the chain corresponds to 1-45 (METAKDNTARTFMELMRVPVQFYRTIGEDIYAHRSTNPLKSLLFK). Residues 46-66 (IYLYAGFINFNLLVIGELVFF) traverse the membrane as a helical segment. Topologically, residues 67–79 (YNSIQDFETIRLA) are extracellular. A helical membrane pass occupies residues 80–100 (IAVAPCIGFSLVADFKQAAMI). The Cytoplasmic segment spans residues 101–139 (RGKKTLIMLLDDLENMHPKTLAKQMEYKLPDFEKTMKRV). The helical transmembrane segment at 140–160 (INIFTFLCLAYTTTFSFYPAI) threads the bilayer. Residues 161–204 (KASVKFNFLGYDTFDRNFGFLIWFPFDATRNNLIYWIMYWDIAH) lie on the Extracellular side of the membrane. Residues 205–225 (GAYLAGIAFLCADLLLVVVIT) form a helical membrane-spanning segment. Residues 226–277 (QICMHFNYISMRLEDHPCNSNEDKENIEFLIGIIRYHDKCLKLCEHVNDLYS) are Cytoplasmic-facing. Residues 278-298 (FSLLLNFLMASMQICFIAFQV) traverse the membrane as a helical segment. Topologically, residues 299 to 304 (TESTVE) are extracellular. The helical transmembrane segment at 305–326 (VIIIYCIFLMTSMVQVFMVCYY) threads the bilayer. Over 327-373 (GDTLIAASLKVGDAAYNQKWFQCSKSYCTMLKLLIMRSQKPASIRPP) the chain is Cytoplasmic. The chain crosses the membrane as a helical span at residues 374–394 (TFPPISLVTYMKVISMSYQFF). At 395–404 (ALLRTTYSNN) the chain is on the extracellular side.

This sequence belongs to the insect chemoreceptor superfamily. Heteromeric odorant receptor channel (TC 1.A.69) family. Or49a subfamily. Interacts with Orco. Complexes exist early in the endomembrane system in olfactory sensory neurons (OSNs), coupling these complexes to the conserved ciliary trafficking pathway. Expressed in olfactory sensory neurons in the antenna.

It is found in the cell membrane. Odorant receptor which mediates acceptance or avoidance behavior, depending on its substrates. The odorant receptor repertoire encodes a large collection of odor stimuli that vary widely in identity, intensity, and duration. May form a complex with Orco to form odorant-sensing units, providing sensitive and prolonged odorant signaling and calcium permeability. The chain is Odorant receptor 67c (Or67c) from Drosophila melanogaster (Fruit fly).